A 95-amino-acid polypeptide reads, in one-letter code: Large ribosomal subunit protein bL25 (95 aa).

Belongs to the bacterial ribosomal protein bL25 family. In terms of assembly, part of the 50S ribosomal subunit; part of the 5S rRNA/L5/L18/L25 subcomplex. Contacts the 5S rRNA. Binds to the 5S rRNA independently of L5 and L18.

This is one of the proteins that binds to the 5S RNA in the ribosome where it forms part of the central protuberance. The polypeptide is Large ribosomal subunit protein bL25 (Haemophilus influenzae (strain 86-028NP)).